The chain runs to 208 residues: Guanylate kinase (208 aa).

Positions 3–181 (GSLFIITAAS…ALTELKAIIV (179 aa)) constitute a Guanylate kinase-like domain. Position 10–17 (10–17 (AASGTGKT)) interacts with ATP.

Belongs to the guanylate kinase family.

Its subcellular location is the cytoplasm. The catalysed reaction is GMP + ATP = GDP + ADP. Essential for recycling GMP and indirectly, cGMP. The sequence is that of Guanylate kinase from Psychrobacter arcticus (strain DSM 17307 / VKM B-2377 / 273-4).